The chain runs to 148 residues: Large ribosomal subunit protein uL22c (148 aa).

It belongs to the universal ribosomal protein uL22 family. Part of the 50S ribosomal subunit.

The protein resides in the plastid. Its subcellular location is the chloroplast. This protein binds specifically to 23S rRNA. Its function is as follows. The globular domain of the protein is located near the polypeptide exit tunnel on the outside of the subunit, while an extended beta-hairpin is found that lines the wall of the exit tunnel in the center of the 70S ribosome. The sequence is that of Large ribosomal subunit protein uL22c (rpl22) from Zea mays (Maize).